The chain runs to 285 residues: Para-Rep C6 (285 aa).

In terms of domain architecture, CRESS-DNA virus Rep endonuclease spans 3–99; the sequence is TRQSTSWVFT…VAGPWEYGLF (97 aa). An RCR-1 motif is present at residues 10-13; sequence VFTL. A divalent metal cation-binding residues include Glu36 and His42. An RCR-2 motif is present at residues 42–44; it reads HLQ. A Nuclear localization signal motif is present at residues 52 to 74; it reads RNTTLRQAKYIFNGLNPHLEIAR. Tyr82 (for DNA cleavage activity) is an active-site residue. The RCR-3 signature appears at 82 to 85; the sequence is YAMK. Asp87 lines the a divalent metal cation pocket. Residues 99–105 carry the Nuclear localization signal motif; that stretch reads FIKRGSH. 175 to 183 contributes to the ATP binding site; sequence GPAGNEGKS.

Belongs to the nanoviridea/circoviridae replication-associated protein family. Homooligomer (Potential). Rep binds to repeated DNA motifs (iterons). The cofactor is Mg(2+). It depends on Mn(2+) as a cofactor.

It is found in the host nucleus. The enzyme catalyses ATP + H2O = ADP + phosphate + H(+). In terms of biological role, initiates and terminates the replication only of its own subviral DNA molecule. The closed circular ssDNA genome is first converted to a superhelical dsDNA. Rep binds a specific hairpin at the genome origin of replication. Introduces an endonucleolytic nick within the intergenic region of the genome, thereby initiating the rolling circle replication (RCR). Following cleavage, binds covalently to the 5'-phosphate of DNA as a tyrosyl ester. The cleavage gives rise to a free 3'-OH that serves as a primer for the cellular DNA polymerase. The polymerase synthesizes the (+) strand DNA by rolling circle mechanism. After one round of replication, a Rep-catalyzed nucleotidyl transfer reaction releases a circular single-stranded virus genome, thereby terminating the replication. Displays origin-specific DNA cleavage, nucleotidyl transferase, ATPase and helicase activities. The polypeptide is Para-Rep C6 (C6) (Subterranean clover stunt C6 alphasatellite (SCSC6A)).